An 87-amino-acid chain; its full sequence is MAHKKAGGSSRNGRDSQAQRLGVKRYGGQFVLAGNIIVRQRGTEFHPGDNVGCGKDHTLFALKDGVIQFSIKGLKKRRVVTIVPAAE.

This sequence belongs to the bacterial ribosomal protein bL27 family.

In Dechloromonas aromatica (strain RCB), this protein is Large ribosomal subunit protein bL27.